Reading from the N-terminus, the 451-residue chain is 3-carboxy-cis,cis-muconate cycloisomerase (451 aa).

This sequence belongs to the class-II fumarase/aspartase family.

It catalyses the reaction 2-(carboxymethyl)-5-oxo-2,5-dihydro-2-furoate = 3-carboxy-cis,cis-muconate + H(+). Functionally, catalyzes an anti cycloisomerization. The chain is 3-carboxy-cis,cis-muconate cycloisomerase (pcaB) from Bradyrhizobium diazoefficiens (strain JCM 10833 / BCRC 13528 / IAM 13628 / NBRC 14792 / USDA 110).